The following is a 274-amino-acid chain: Uridine-5'-phosphate dioxygenase (274 aa).

3 residues coordinate Fe cation: histidine 103, aspartate 105, and histidine 246.

The cofactor is Fe(2+).

It catalyses the reaction UMP + 2-oxoglutarate + O2 = uridine-5'-aldehyde + succinate + phosphate + CO2. The protein operates within antibiotic biosynthesis. Inhibited by several divalent cations, including Zn(2+). Functionally, dioxygenase involved in the biosynthesis of the lipopeptidyl nucleoside antibiotic A-90289. Catalyzes the dephosphorylation and oxidation of UMP to generate uridine-5'-aldehyde, the first intermediate in the biosynthesis of A-90289. The polypeptide is Uridine-5'-phosphate dioxygenase (Streptomyces sp).